A 930-amino-acid chain; its full sequence is Serine/threonine-protein kinase PknD (930 aa).

The Protein kinase domain maps to 4 to 291 (YDIIRMIGKG…ALKADIEQHL (288 aa)). ATP-binding positions include 10 to 18 (IGKGGMGEV) and Lys-33. Asp-138 serves as the catalytic Proton acceptor.

This sequence belongs to the protein kinase superfamily. Ser/Thr protein kinase family. Autophosphorylated on serine and threonine residues.

It catalyses the reaction L-seryl-[protein] + ATP = O-phospho-L-seryl-[protein] + ADP + H(+). The catalysed reaction is L-threonyl-[protein] + ATP = O-phospho-L-threonyl-[protein] + ADP + H(+). Its function is as follows. Together with the serine/threonine kinase Pkn1, may play a role in the specific interactions with host proteins during intracellular growth. The protein is Serine/threonine-protein kinase PknD of Chlamydia caviae (strain ATCC VR-813 / DSM 19441 / 03DC25 / GPIC) (Chlamydophila caviae).